Reading from the N-terminus, the 115-residue chain is NADH-ubiquinone oxidoreductase chain 3 (115 aa).

Transmembrane regions (helical) follow at residues 3-23 (FVLI…ITFW), 55-75 (FFLV…LLPL), and 84-104 (LPLM…SLAY).

This sequence belongs to the complex I subunit 3 family. In terms of assembly, core subunit of respiratory chain NADH dehydrogenase (Complex I) which is composed of 45 different subunits. Interacts with TMEM186. Interacts with TMEM242.

It localises to the mitochondrion inner membrane. It catalyses the reaction a ubiquinone + NADH + 5 H(+)(in) = a ubiquinol + NAD(+) + 4 H(+)(out). In terms of biological role, core subunit of the mitochondrial membrane respiratory chain NADH dehydrogenase (Complex I) which catalyzes electron transfer from NADH through the respiratory chain, using ubiquinone as an electron acceptor. Essential for the catalytic activity of complex I. The chain is NADH-ubiquinone oxidoreductase chain 3 from Pan paniscus (Pygmy chimpanzee).